Here is a 372-residue protein sequence, read N- to C-terminus: Trihelix transcription factor GT-4 (372 aa).

In terms of domain architecture, Myb-like spans 47–111 (APKKRAETWA…MCTDKWRNIL (65 aa)). Residue serine 167 is modified to Phosphoserine.

Its subcellular location is the nucleus. Functionally, probable transcription factor that binds specific DNA sequence. The sequence is that of Trihelix transcription factor GT-4 (GT-4) from Arabidopsis thaliana (Mouse-ear cress).